Reading from the N-terminus, the 200-residue chain is 3-isopropylmalate dehydratase small subunit (200 aa).

It belongs to the LeuD family. LeuD type 1 subfamily. As to quaternary structure, heterodimer of LeuC and LeuD.

It catalyses the reaction (2R,3S)-3-isopropylmalate = (2S)-2-isopropylmalate. The protein operates within amino-acid biosynthesis; L-leucine biosynthesis; L-leucine from 3-methyl-2-oxobutanoate: step 2/4. Catalyzes the isomerization between 2-isopropylmalate and 3-isopropylmalate, via the formation of 2-isopropylmaleate. The sequence is that of 3-isopropylmalate dehydratase small subunit (leuD) from Synechocystis sp. (strain ATCC 27184 / PCC 6803 / Kazusa).